A 121-amino-acid chain; its full sequence is Small ribosomal subunit protein uS13 (121 aa).

Residues 98–121 (RGQKTRNNAHTVKGKPKSIAGKKK) form a disordered region. The segment covering 109–121 (VKGKPKSIAGKKK) has biased composition (basic residues).

The protein belongs to the universal ribosomal protein uS13 family. In terms of assembly, part of the 30S ribosomal subunit. Forms a loose heterodimer with protein S19. Forms two bridges to the 50S subunit in the 70S ribosome.

In terms of biological role, located at the top of the head of the 30S subunit, it contacts several helices of the 16S rRNA. In the 70S ribosome it contacts the 23S rRNA (bridge B1a) and protein L5 of the 50S subunit (bridge B1b), connecting the 2 subunits; these bridges are implicated in subunit movement. Contacts the tRNAs in the A and P-sites. This chain is Small ribosomal subunit protein uS13, found in Phytoplasma australiense.